The chain runs to 615 residues: Protein translocase subunit SecD (615 aa).

A run of 6 helical transmembrane segments spans residues 10–30, 452–472, 477–497, 504–524, 548–570, and 585–605; these read YVMLIVVIVIGLLYALPNLFG, QGLEACLAGLLVSILFMIIFY, LIATSALIANLILIVGIMSLL, MPGIAGIVLTLAVAVDANVLI, GAFSSIFDANITTLIKVIILYAV, and GVATSMFTAIVGTRAIVNLLY.

The protein belongs to the SecD/SecF family. SecD subfamily. Forms a complex with SecF. Part of the essential Sec protein translocation apparatus which comprises SecA, SecYEG and auxiliary proteins SecDF-YajC and YidC.

The protein resides in the cell inner membrane. Its function is as follows. Part of the Sec protein translocase complex. Interacts with the SecYEG preprotein conducting channel. SecDF uses the proton motive force (PMF) to complete protein translocation after the ATP-dependent function of SecA. The sequence is that of Protein translocase subunit SecD from Shigella flexneri.